The chain runs to 266 residues: Dickkopf-related protein 1 (266 aa).

A signal peptide spans 1 to 31; the sequence is MMALGAAGATRVFVAMVAAALGGHPLLGVSA. A glycan (O-linked (GalNAc...) serine) is linked at Ser-61. 10 disulfide bridges follow: Cys-85–Cys-97, Cys-91–Cys-111, Cys-114–Cys-128, Cys-121–Cys-133, Cys-127–Cys-138, Cys-189–Cys-201, Cys-195–Cys-210, Cys-200–Cys-237, Cys-220–Cys-245, and Cys-239–Cys-263. The tract at residues 85–138 is DKK-type Cys-1; the sequence is CAEDEECGTDEYCASPTRGGDAGVQICLACRKRRKRCMRHAMCCPGNYCKNGIC. Residues 189-263 are DKK-type Cys-2; sequence CLRSSDCASG…ASNSSRLHTC (75 aa). N-linked (GlcNAc...) asparagine glycosylation occurs at Asn-256.

The protein belongs to the dickkopf family. As to quaternary structure, interacts with LRP6. Interacts (via the C-terminal Cys-rich domain) with LRP5 (via beta-propeller regions 3 and 4); the interaction, enhanced by MESD and or KREMEN, antagonizes Wnt-mediated signaling. Forms a ternary complex with LRP6 and KREM1. Interacts with KREM1. Placenta.

It localises to the secreted. Antagonizes canonical Wnt signaling by inhibiting LRP5/6 interaction with Wnt and by forming a ternary complex with the transmembrane protein KREMEN that promotes internalization of LRP5/6. DKKs play an important role in vertebrate development, where they locally inhibit Wnt regulated processes such as antero-posterior axial patterning, limb development, somitogenesis and eye formation. In the adult, Dkks are implicated in bone formation and bone disease, cancer and Alzheimer disease. Inhibits the pro-apoptotic function of KREMEN1 in a Wnt-independent manner, and has anti-apoptotic activity. The polypeptide is Dickkopf-related protein 1 (DKK1) (Homo sapiens (Human)).